The primary structure comprises 693 residues: Polyribonucleotide nucleotidyltransferase (693 aa).

The Mg(2+) site is built by aspartate 486 and aspartate 492. Residues 553 to 612 enclose the KH domain; that stretch reads PRIHTIKINPEKIKDVIGKGGSVIRMLTEETGTTIEIEDDGTVKISAVMQEKAKCAIQRI. The 69-residue stretch at 622–690 folds into the S1 motif domain; it reads GSVYTGKVTR…RQGRLRLSIK (69 aa).

This sequence belongs to the polyribonucleotide nucleotidyltransferase family. As to quaternary structure, component of the RNA degradosome, which is a multiprotein complex involved in RNA processing and mRNA degradation. The cofactor is Mg(2+).

The protein resides in the cytoplasm. It catalyses the reaction RNA(n+1) + phosphate = RNA(n) + a ribonucleoside 5'-diphosphate. Its function is as follows. Involved in mRNA degradation. Catalyzes the phosphorolysis of single-stranded polyribonucleotides processively in the 3'- to 5'-direction. This Buchnera aphidicola subsp. Baizongia pistaciae (strain Bp) protein is Polyribonucleotide nucleotidyltransferase.